Here is a 235-residue protein sequence, read N- to C-terminus: Small ribosomal subunit protein eS4 (235 aa).

The 62-residue stretch at 38–99 (VTLLTIIRDY…GESYRVVYNN (62 aa)) folds into the S4 RNA-binding domain.

Belongs to the eukaryotic ribosomal protein eS4 family.

This is Small ribosomal subunit protein eS4 (rps4e) from Thermoplasma volcanium (strain ATCC 51530 / DSM 4299 / JCM 9571 / NBRC 15438 / GSS1).